The sequence spans 399 residues: Exodeoxyribonuclease 7 large subunit (399 aa).

The protein belongs to the XseA family. In terms of assembly, heterooligomer composed of large and small subunits.

It is found in the cytoplasm. It carries out the reaction Exonucleolytic cleavage in either 5'- to 3'- or 3'- to 5'-direction to yield nucleoside 5'-phosphates.. Its function is as follows. Bidirectionally degrades single-stranded DNA into large acid-insoluble oligonucleotides, which are then degraded further into small acid-soluble oligonucleotides. This is Exodeoxyribonuclease 7 large subunit from Clostridium acetobutylicum (strain ATCC 824 / DSM 792 / JCM 1419 / IAM 19013 / LMG 5710 / NBRC 13948 / NRRL B-527 / VKM B-1787 / 2291 / W).